Reading from the N-terminus, the 430-residue chain is Zinc finger and SCAN domain-containing protein 4 (430 aa).

Residues 1–38 (MASDLRISFQGEPSRNDPGSENLEHKPSQGPAVQEEEE) are disordered. Residues 44–126 (RTQLSLLQNS…KFMEDLTDES (83 aa)) form the SCAN box domain. Polar residues predominate over residues 164-185 (GSPTGTDMETPSWTPQDTSLET). Disordered stretches follow at residues 164-196 (GSPT…KENG), 224-257 (YPRP…SLKG), and 281-300 (EPVP…GHQE). C2H2-type zinc fingers lie at residues 309-331 (YRCE…QRRH), 337-359 (FTCA…QKIH), 365-387 (FTCS…ERIH), and 393-415 (YECS…LRNH).

It localises to the nucleus. The protein localises to the chromosome. Its subcellular location is the telomere. Embryonic stem (ES) cell-specific transcription factor required to regulate ES cell pluripotency. Binds telomeres and plays a key role in genomic stability in ES cells by regulating telomere elongation. Acts as an activator of spontaneous telomere sister chromatid exchange (T-SCE) and telomere elongation in undifferentiated ES cells. In Ailuropoda melanoleuca (Giant panda), this protein is Zinc finger and SCAN domain-containing protein 4 (ZSCAN4).